The primary structure comprises 458 residues: Argininosuccinate lyase (458 aa).

Belongs to the lyase 1 family. Argininosuccinate lyase subfamily.

The protein resides in the cytoplasm. It catalyses the reaction 2-(N(omega)-L-arginino)succinate = fumarate + L-arginine. It participates in amino-acid biosynthesis; L-arginine biosynthesis; L-arginine from L-ornithine and carbamoyl phosphate: step 3/3. This chain is Argininosuccinate lyase, found in Salmonella choleraesuis (strain SC-B67).